The sequence spans 549 residues: Dihydroxy-acid dehydratase (549 aa).

Asp78 contacts Mg(2+). Cys119 lines the [2Fe-2S] cluster pocket. Mg(2+) contacts are provided by Asp120 and Lys121. At Lys121 the chain carries N6-carboxylysine. Cys191 lines the [2Fe-2S] cluster pocket. Residue Glu441 participates in Mg(2+) binding. The active-site Proton acceptor is the Ser466.

It belongs to the IlvD/Edd family. As to quaternary structure, homodimer. The cofactor is [2Fe-2S] cluster. Requires Mg(2+) as cofactor.

The enzyme catalyses (2R)-2,3-dihydroxy-3-methylbutanoate = 3-methyl-2-oxobutanoate + H2O. It catalyses the reaction (2R,3R)-2,3-dihydroxy-3-methylpentanoate = (S)-3-methyl-2-oxopentanoate + H2O. It functions in the pathway amino-acid biosynthesis; L-isoleucine biosynthesis; L-isoleucine from 2-oxobutanoate: step 3/4. The protein operates within amino-acid biosynthesis; L-valine biosynthesis; L-valine from pyruvate: step 3/4. Functions in the biosynthesis of branched-chain amino acids. Catalyzes the dehydration of (2R,3R)-2,3-dihydroxy-3-methylpentanoate (2,3-dihydroxy-3-methylvalerate) into 2-oxo-3-methylpentanoate (2-oxo-3-methylvalerate) and of (2R)-2,3-dihydroxy-3-methylbutanoate (2,3-dihydroxyisovalerate) into 2-oxo-3-methylbutanoate (2-oxoisovalerate), the penultimate precursor to L-isoleucine and L-valine, respectively. The protein is Dihydroxy-acid dehydratase of Methanobrevibacter smithii (strain ATCC 35061 / DSM 861 / OCM 144 / PS).